Reading from the N-terminus, the 391-residue chain is ATP phosphoribosyltransferase regulatory subunit (391 aa).

This sequence belongs to the class-II aminoacyl-tRNA synthetase family. HisZ subfamily. As to quaternary structure, heteromultimer composed of HisG and HisZ subunits.

It localises to the cytoplasm. It functions in the pathway amino-acid biosynthesis; L-histidine biosynthesis; L-histidine from 5-phospho-alpha-D-ribose 1-diphosphate: step 1/9. Required for the first step of histidine biosynthesis. May allow the feedback regulation of ATP phosphoribosyltransferase activity by histidine. In Prochlorococcus marinus (strain NATL1A), this protein is ATP phosphoribosyltransferase regulatory subunit.